A 159-amino-acid polypeptide reads, in one-letter code: 6,7-dimethyl-8-ribityllumazine synthase (159 aa).

5-amino-6-(D-ribitylamino)uracil contacts are provided by residues W26, 57-59 (ALE), and 79-81 (CVI). 84–85 (GT) serves as a coordination point for (2S)-2-hydroxy-3-oxobutyl phosphate. H87 acts as the Proton donor in catalysis. A 5-amino-6-(D-ribitylamino)uracil-binding site is contributed by N112. R126 serves as a coordination point for (2S)-2-hydroxy-3-oxobutyl phosphate.

Belongs to the DMRL synthase family.

The enzyme catalyses (2S)-2-hydroxy-3-oxobutyl phosphate + 5-amino-6-(D-ribitylamino)uracil = 6,7-dimethyl-8-(1-D-ribityl)lumazine + phosphate + 2 H2O + H(+). Its pathway is cofactor biosynthesis; riboflavin biosynthesis; riboflavin from 2-hydroxy-3-oxobutyl phosphate and 5-amino-6-(D-ribitylamino)uracil: step 1/2. In terms of biological role, catalyzes the formation of 6,7-dimethyl-8-ribityllumazine by condensation of 5-amino-6-(D-ribitylamino)uracil with 3,4-dihydroxy-2-butanone 4-phosphate. This is the penultimate step in the biosynthesis of riboflavin. In Corynebacterium efficiens (strain DSM 44549 / YS-314 / AJ 12310 / JCM 11189 / NBRC 100395), this protein is 6,7-dimethyl-8-ribityllumazine synthase.